The primary structure comprises 270 residues: Esterase (270 aa).

Active-site charge relay system residues include Ser127, Asp216, and His244.

The protein belongs to the LovG family.

Its pathway is mycotoxin biosynthesis. Functionally, esterase; part of the gene cluster that mediates the biosynthesis of the selective antifungal agent ascochitine, an o-quinone methide that plays a possible protective role against other microbial competitors in nature and is considered to be important for pathogenicity of legume-associated Didymella species. The pathway probably begins with the synthesis of a keto-aldehyde intermediate by the ascochitine non-reducing polyketide synthase pksAC from successive condensations of 4 malonyl-CoA units, presumably with a simple acetyl-CoA starter unit. Release of the keto-aldehyde intermediate is consistent with the presence of the C-terminal reductive release domain. The HR-PKS (orf7) probably makes a diketide starter unit which is passed to the non-reducing polyketide synthase pksAC for further extension, producing ascochital and ascochitine. The aldehyde dehydrogenase (orf1), the 2-oxoglutarate-dependent dioxygenase (orf3) and the dehydrogenase (orf9) are probably involved in subsequent oxidations of methyl groups to the carboxylic acid of the heterocyclic ring. The ascochitine gene cluster also includes a gene encoding a short peptide with a cupin domain (orf2) that is often found in secondary metabolite gene clusters and which function has still to be determined. The chain is Esterase from Didymella fabae (Leaf and pod spot disease fungus).